The chain runs to 399 residues: tRNA-specific 2-thiouridylase MnmA (399 aa).

ATP contacts are provided by residues 7–14 (AMSGGVDS) and Met33. Residue Cys128 is the Nucleophile of the active site. Cys128 and Cys224 are disulfide-bonded. Gly152 provides a ligand contact to ATP. The tract at residues 174–176 (KDQ) is interaction with tRNA. Residue Cys224 is the Cysteine persulfide intermediate of the active site. The tract at residues 333-334 (RY) is interaction with tRNA.

The protein belongs to the MnmA/TRMU family.

The protein localises to the cytoplasm. The enzyme catalyses S-sulfanyl-L-cysteinyl-[protein] + uridine(34) in tRNA + AH2 + ATP = 2-thiouridine(34) in tRNA + L-cysteinyl-[protein] + A + AMP + diphosphate + H(+). Catalyzes the 2-thiolation of uridine at the wobble position (U34) of tRNA, leading to the formation of s(2)U34. This chain is tRNA-specific 2-thiouridylase MnmA, found in Rhodopirellula baltica (strain DSM 10527 / NCIMB 13988 / SH1).